A 309-amino-acid polypeptide reads, in one-letter code: Homoserine kinase (309 aa).

91–101 (PIGSGLGSSAC) contributes to the ATP binding site.

The protein belongs to the GHMP kinase family. Homoserine kinase subfamily.

Its subcellular location is the cytoplasm. The enzyme catalyses L-homoserine + ATP = O-phospho-L-homoserine + ADP + H(+). It participates in amino-acid biosynthesis; L-threonine biosynthesis; L-threonine from L-aspartate: step 4/5. In terms of biological role, catalyzes the ATP-dependent phosphorylation of L-homoserine to L-homoserine phosphate. The protein is Homoserine kinase of Erwinia tasmaniensis (strain DSM 17950 / CFBP 7177 / CIP 109463 / NCPPB 4357 / Et1/99).